We begin with the raw amino-acid sequence, 382 residues long: Anhydro-N-acetylmuramic acid kinase (382 aa).

Residue 22–29 participates in ATP binding; that stretch reads GTSMDGVD.

Belongs to the anhydro-N-acetylmuramic acid kinase family.

The enzyme catalyses 1,6-anhydro-N-acetyl-beta-muramate + ATP + H2O = N-acetyl-D-muramate 6-phosphate + ADP + H(+). Its pathway is amino-sugar metabolism; 1,6-anhydro-N-acetylmuramate degradation. It functions in the pathway cell wall biogenesis; peptidoglycan recycling. Functionally, catalyzes the specific phosphorylation of 1,6-anhydro-N-acetylmuramic acid (anhMurNAc) with the simultaneous cleavage of the 1,6-anhydro ring, generating MurNAc-6-P. Is required for the utilization of anhMurNAc either imported from the medium or derived from its own cell wall murein, and thus plays a role in cell wall recycling. In Burkholderia orbicola (strain AU 1054), this protein is Anhydro-N-acetylmuramic acid kinase.